The chain runs to 347 residues: NADH-ubiquinone oxidoreductase chain 2 (347 aa).

The next 11 membrane-spanning stretches (helical) occupy residues 3-23 (PLIM…VMTG), 25-45 (HWLM…PMLM), 59-79 (YFFT…INLM), 96-116 (IIMT…FWVP), 127-147 (GLIL…MISP), 148-168 (GINL…GGWG), 178-198 (IMAY…IYNP), 201-221 (TLLN…LFMI), 247-267 (TLLS…WMII), 276-296 (IVLP…YMRL), and 325-345 (LLTP…MMMI).

It belongs to the complex I subunit 2 family. In terms of assembly, core subunit of respiratory chain NADH dehydrogenase (Complex I) which is composed of 45 different subunits. Interacts with TMEM242.

Its subcellular location is the mitochondrion inner membrane. The enzyme catalyses a ubiquinone + NADH + 5 H(+)(in) = a ubiquinol + NAD(+) + 4 H(+)(out). Functionally, core subunit of the mitochondrial membrane respiratory chain NADH dehydrogenase (Complex I) which catalyzes electron transfer from NADH through the respiratory chain, using ubiquinone as an electron acceptor. Essential for the catalytic activity and assembly of complex I. This is NADH-ubiquinone oxidoreductase chain 2 from Ozimops beccarii (Beccari's free-tailed bat).